Consider the following 434-residue polypeptide: Adenylosuccinate synthetase (434 aa).

GTP contacts are provided by residues 11-17 and 39-41; these read GDEGKGK and GHT. Catalysis depends on Asp-12, which acts as the Proton acceptor. Mg(2+)-binding residues include Asp-12 and Gly-39. IMP is bound by residues 12–15, 37–40, Thr-134, Arg-148, Asn-230, Thr-245, and Arg-309; these read DEGK and NAGH. Residue His-40 is the Proton donor of the active site. A substrate-binding site is contributed by 305–311; sequence VTTGRKR. GTP is bound by residues Arg-311, 337-339, and 419-421; these read KLD and GTG.

It belongs to the adenylosuccinate synthetase family. In terms of assembly, homodimer. Mg(2+) serves as cofactor.

The protein resides in the cytoplasm. It carries out the reaction IMP + L-aspartate + GTP = N(6)-(1,2-dicarboxyethyl)-AMP + GDP + phosphate + 2 H(+). The protein operates within purine metabolism; AMP biosynthesis via de novo pathway; AMP from IMP: step 1/2. Its function is as follows. Plays an important role in the de novo pathway and in the salvage pathway of purine nucleotide biosynthesis. Catalyzes the first committed step in the biosynthesis of AMP from IMP. The sequence is that of Adenylosuccinate synthetase from Lachancea thermotolerans (strain ATCC 56472 / CBS 6340 / NRRL Y-8284) (Yeast).